Consider the following 262-residue polypeptide: Pyridoxine 5'-phosphate synthase (262 aa).

Asparagine 6 lines the 3-amino-2-oxopropyl phosphate pocket. Residue 8–9 coordinates 1-deoxy-D-xylulose 5-phosphate; that stretch reads DH. Arginine 17 provides a ligand contact to 3-amino-2-oxopropyl phosphate. The active-site Proton acceptor is histidine 43. Positions 45 and 50 each coordinate 1-deoxy-D-xylulose 5-phosphate. The active-site Proton acceptor is the glutamate 70. Threonine 102 contacts 1-deoxy-D-xylulose 5-phosphate. Residue histidine 215 is the Proton donor of the active site. 3-amino-2-oxopropyl phosphate contacts are provided by residues glycine 216 and 237-238; that span reads GH.

This sequence belongs to the PNP synthase family. In terms of assembly, homooctamer; tetramer of dimers.

The protein localises to the cytoplasm. The enzyme catalyses 3-amino-2-oxopropyl phosphate + 1-deoxy-D-xylulose 5-phosphate = pyridoxine 5'-phosphate + phosphate + 2 H2O + H(+). The protein operates within cofactor biosynthesis; pyridoxine 5'-phosphate biosynthesis; pyridoxine 5'-phosphate from D-erythrose 4-phosphate: step 5/5. Catalyzes the complicated ring closure reaction between the two acyclic compounds 1-deoxy-D-xylulose-5-phosphate (DXP) and 3-amino-2-oxopropyl phosphate (1-amino-acetone-3-phosphate or AAP) to form pyridoxine 5'-phosphate (PNP) and inorganic phosphate. The protein is Pyridoxine 5'-phosphate synthase of Helicobacter pylori (strain ATCC 700392 / 26695) (Campylobacter pylori).